The sequence spans 637 residues: Threonine--tRNA ligase (637 aa).

The 61-residue stretch at 1–61 (MIKISLKNGK…NKDCKVEILT (61 aa)) folds into the TGS domain. Residues 242–532 (DHRKLGKELD…LIEHYAGAFP (291 aa)) form a catalytic region. Positions 333, 384, and 509 each coordinate Zn(2+).

Belongs to the class-II aminoacyl-tRNA synthetase family. In terms of assembly, homodimer. It depends on Zn(2+) as a cofactor.

Its subcellular location is the cytoplasm. It carries out the reaction tRNA(Thr) + L-threonine + ATP = L-threonyl-tRNA(Thr) + AMP + diphosphate + H(+). Functionally, catalyzes the attachment of threonine to tRNA(Thr) in a two-step reaction: L-threonine is first activated by ATP to form Thr-AMP and then transferred to the acceptor end of tRNA(Thr). Also edits incorrectly charged L-seryl-tRNA(Thr). The sequence is that of Threonine--tRNA ligase from Clostridium kluyveri (strain NBRC 12016).